Here is a 394-residue protein sequence, read N- to C-terminus: THAP domain-containing protein 5 (394 aa).

The THAP-type zinc finger occupies 1-84; the sequence is MPRYCAAICC…LKQTAIPTIF (84 aa). The tract at residues 86 to 109 is disordered; that stretch reads LPEDNQEKDPSKKKSQKKKLKSEK. The HCFC1-binding motif (HBM) motif lies at 320 to 323; that stretch reads EHSY. Positions 347-381 form a coiled coil; the sequence is LELQEQQTLGRLKSLEALIRQLKQENWLSEENVKI.

As to quaternary structure, interacts with HTRA2; under apoptotic conditions. Interacts with ABRAXAS2. Cleaved by HTRA2 during apoptosis.

The protein resides in the nucleus. Has sequence-specific DNA-binding activity and can function as transcriptional repressor (in vitro). May be a regulator of cell cycle: THAP5 overexpression in human cell lines causes cell cycle arrest at G2/M phase. This Bos taurus (Bovine) protein is THAP domain-containing protein 5 (THAP5).